The following is a 195-amino-acid chain: uncharacterized protein (195 aa).

The chain crosses the membrane as a helical span at residues I175 to G195.

The protein localises to the membrane. This is an uncharacterized protein from Methanocaldococcus jannaschii (strain ATCC 43067 / DSM 2661 / JAL-1 / JCM 10045 / NBRC 100440) (Methanococcus jannaschii).